A 286-amino-acid chain; its full sequence is Plasma membrane ascorbate-dependent reductase CYBRD1 (286 aa).

At Met1–Arg7 the chain is on the cytoplasmic side. The chain crosses the membrane as a helical span at residues Gly8–Leu32. The 206-residue stretch at Ser15–Thr220 folds into the Cytochrome b561 domain. The Extracellular segment spans residues His33–Phe47. The helical transmembrane segment at Asn48 to Tyr69 threads the bilayer. Residues His50, Arg70, and Lys79 each contribute to the heme b site. Residues Arg70 to Ser78 lie on the Cytoplasmic side of the membrane. 2 residues coordinate L-ascorbate: Lys79 and Lys83. The helical transmembrane segment at Lys79–Phe105 threads the bilayer. His86 is a heme b binding site. Topologically, residues Asp106 to Ser118 are extracellular. His108 lines the Fe(3+) pocket. Heme b contacts are provided by residues His115–Ser118 and His120. A helical membrane pass occupies residues Leu119–Leu144. At Pro145–Leu151 the chain is on the cytoplasmic side. Arg152 serves as a coordination point for L-ascorbate. Residues Arg152–Thr179 form a helical membrane-spanning segment. The heme b site is built by His159 and Glu180. The Extracellular segment spans residues Glu180–Glu197. The helical transmembrane segment at Gly198–Pro222 threads the bilayer. Topologically, residues Gln223 to Met286 are cytoplasmic. Lys225 contributes to the heme b binding site. Ser232 carries the post-translational modification Phosphoserine. The residue at position 285 (Thr285) is a Phosphothreonine.

In terms of assembly, homodimer. It depends on heme b as a cofactor. Highly expressed in all regions of the small intestine and colon studied in suckling animals. However, after weaning, when iron absorption declines significantly, strong expression is retained only in the duodenum. Also expressed in respiratory epithelium.

It localises to the cell membrane. The protein resides in the apical cell membrane. It catalyses the reaction Fe(3+)(out) + L-ascorbate(in) = monodehydro-L-ascorbate radical(in) + Fe(2+)(out) + H(+). The catalysed reaction is Cu(2+)(out) + L-ascorbate(in) = Cu(+)(out) + monodehydro-L-ascorbate radical(in) + H(+). It carries out the reaction monodehydro-L-ascorbate radical(out) + L-ascorbate(in) = monodehydro-L-ascorbate radical(in) + L-ascorbate(out). In terms of biological role, plasma membrane reductase that uses cytoplasmic ascorbate as an electron donor to reduce extracellular Fe(3+) into Fe(2+). Probably functions in dietary iron absorption at the brush border of duodenal enterocytes by producing Fe(2+), the divalent form of iron that can be transported into enterocytes. It is also able to reduce extracellular monodehydro-L-ascorbate and may be involved in extracellular ascorbate regeneration by erythrocytes in blood. May also act as a ferrireductase in airway epithelial cells. May also function as a cupric transmembrane reductase. This chain is Plasma membrane ascorbate-dependent reductase CYBRD1, found in Rattus norvegicus (Rat).